A 422-amino-acid polypeptide reads, in one-letter code: Isocitrate dehydrogenase [NADP] (422 aa).

Thr-94 contributes to the NADP(+) binding site. Positions 103, 105, 109, 119, and 143 each coordinate D-threo-isocitrate. A Mg(2+)-binding site is contributed by Asp-310. NADP(+) contacts are provided by residues 344 to 350, Asn-357, Tyr-396, and Arg-400; that span reads HGTAPKY.

The protein belongs to the isocitrate and isopropylmalate dehydrogenases family. As to quaternary structure, homodimer. Mg(2+) serves as cofactor. It depends on Mn(2+) as a cofactor.

The catalysed reaction is D-threo-isocitrate + NADP(+) = 2-oxoglutarate + CO2 + NADPH. Its function is as follows. Catalyzes the oxidative decarboxylation of isocitrate to 2-oxoglutarate and carbon dioxide with the concomitant reduction of NADP(+). This Staphylococcus epidermidis (strain ATCC 35984 / DSM 28319 / BCRC 17069 / CCUG 31568 / BM 3577 / RP62A) protein is Isocitrate dehydrogenase [NADP] (icd).